Reading from the N-terminus, the 335-residue chain is Glucokinase (335 aa).

11 to 16 (ADIGGT) provides a ligand contact to ATP.

The protein belongs to the bacterial glucokinase family.

It is found in the cytoplasm. It catalyses the reaction D-glucose + ATP = D-glucose 6-phosphate + ADP + H(+). This is Glucokinase from Xanthomonas axonopodis pv. citri (strain 306).